The following is a 1342-amino-acid chain: DNA-directed RNA polymerase subunit beta (1342 aa).

The protein belongs to the RNA polymerase beta chain family. The RNAP catalytic core consists of 2 alpha, 1 beta, 1 beta' and 1 omega subunit. When a sigma factor is associated with the core the holoenzyme is formed, which can initiate transcription.

The catalysed reaction is RNA(n) + a ribonucleoside 5'-triphosphate = RNA(n+1) + diphosphate. DNA-dependent RNA polymerase catalyzes the transcription of DNA into RNA using the four ribonucleoside triphosphates as substrates. This chain is DNA-directed RNA polymerase subunit beta, found in Histophilus somni (strain 129Pt) (Haemophilus somnus).